The following is a 358-amino-acid chain: Probable butyrate kinase (358 aa).

Belongs to the acetokinase family.

Its subcellular location is the cytoplasm. It carries out the reaction butanoate + ATP = butanoyl phosphate + ADP. The protein is Probable butyrate kinase of Oceanobacillus iheyensis (strain DSM 14371 / CIP 107618 / JCM 11309 / KCTC 3954 / HTE831).